We begin with the raw amino-acid sequence, 359 residues long: Peptide chain release factor 1 (359 aa).

Gln-235 carries the post-translational modification N5-methylglutamine. Residues 287–312 form a disordered region; that stretch reads AQEASAMRSAQVGSGDRSERIRTYNF.

Belongs to the prokaryotic/mitochondrial release factor family. In terms of processing, methylated by PrmC. Methylation increases the termination efficiency of RF1.

It localises to the cytoplasm. Functionally, peptide chain release factor 1 directs the termination of translation in response to the peptide chain termination codons UAG and UAA. The chain is Peptide chain release factor 1 from Chlamydia trachomatis serovar A (strain ATCC VR-571B / DSM 19440 / HAR-13).